A 367-amino-acid polypeptide reads, in one-letter code: uncharacterized protein (367 aa).

Positions 1-96 (ITLHRLAELV…LTATLQLQPV (96 aa)) constitute an FAD-binding PCMH-type domain.

It to M.tuberculosis Rv3790.

This is an uncharacterized protein from Streptomyces coelicolor.